The chain runs to 79 residues: Putative transmembrane protein ORF17 (79 aa).

A run of 2 helical transmembrane segments spans residues 8 to 28 (LMIY…IMYY) and 50 to 70 (VFVM…TTTI).

It localises to the host membrane. This Haloarcula hispanica (His1V) protein is Putative transmembrane protein ORF17.